The sequence spans 579 residues: Folliculin (579 aa).

The interval 32–82 (GAGSGDGAGRGEPADEEEGGIQMSSRIRAHSPAEGASAESSSPGPKKSDMC) is disordered. Residues Ser62 and Ser73 each carry the phosphoserine modification. Residues 63-76 (PAEGASAESSSPGP) are compositionally biased toward low complexity. A uDENN FLCN/SMCR8-type domain is found at 86-242 (RSLAAGHPGY…RNGNAARSLT (157 aa)). Residues 285–309 (QMEQLAELEEESESWDNSEAEEEEK) are a coiled coil. Residues 294–308 (EESESWDNSEAEEEE) are compositionally biased toward acidic residues. The tract at residues 294–321 (EESESWDNSEAEEEEKGPALPEGAEGRE) is disordered. A phosphoserine mark is found at Ser302, Ser406, Ser537, Ser542, and Ser571. One can recognise a cDENN FLCN/SMCR8-type domain in the interval 339-491 (QPRKLSVFKS…ILNKMEAALT (153 aa)). The 66-residue stretch at 493 to 558 (QNLSVDVVDQ…LLKFWMTGLS (66 aa)) folds into the dDENN FLCN/SMCR8-type domain.

This sequence belongs to the folliculin family. Interacts (via C-terminus) with FNIP1 or FNIP2 (via C-terminus). Component of the lysosomal folliculin complex (LFC), composed of FLCN, FNIP1 (or FNIP2), RagA/RRAGA or RagB/RRAGB GDP-bound, RagC/RRAGC or RagD/RRAGD GTP-bound, and Ragulator. Interaction with FNIP1 or FNIP2 mediates indirect interaction with the PRKAA1, PRKAB1 and PRKAG1 subunits of 5'-AMP-activated protein kinase (AMPK). Interacts with HSP90AA1 in the presence of FNIP1. Interacts with HSP70, STUB1, CDC37, AHSA1, CCT2, STIP1, PTGES3 and PPP5C. Interacts with GABARAP; interaction takes place in the presence of FNIP1 and/or FNIP2. Interacts with RILP; the interaction is direct and promotes association between RILP and RAB34. Interacts with KIF3A and KIF3B. Interacts with lactate dehydrogenase LDHA, but not LDHB; the interaction is direct, may preferentially bind LDHA dimers rather than tetramers, and regulates LDHA activity, acting as an uncompetitive inhibitor. In terms of processing, phosphorylation by ULK1 modulates the interaction with GABARAP and is required to regulate autophagy.

It localises to the lysosome membrane. Its subcellular location is the cytoplasm. The protein localises to the cytosol. The protein resides in the cell projection. It is found in the cilium. It localises to the cytoskeleton. Its subcellular location is the microtubule organizing center. The protein localises to the centrosome. The protein resides in the spindle. It is found in the nucleus. GTPase-activating activity is inhibited in the folliculin complex (LFC), which stabilizes the GDP-bound state of RagA/RRAGA (or RagB/RRAGB), because Arg-164 is located far from the RagC/RRAGC or RagD/RRAGD nucleotide pocket. Disassembly of the LFC complex upon amino acid restimulation liberates the GTPase-activating activity. Multi-functional protein, involved in both the cellular response to amino acid availability and in the regulation of glycolysis. GTPase-activating protein that plays a key role in the cellular response to amino acid availability through regulation of the non-canonical mTORC1 signaling cascade controlling the MiT/TFE factors TFEB and TFE3. Activates mTORC1 by acting as a GTPase-activating protein: specifically stimulates GTP hydrolysis by RagC/RRAGC or RagD/RRAGD, promoting the conversion to the GDP-bound state of RagC/RRAGC or RagD/RRAGD, and thereby activating the kinase activity of mTORC1. The GTPase-activating activity is inhibited during starvation and activated in presence of nutrients. Acts as a key component for non-canonical mTORC1-dependent control of the MiT/TFE factors TFEB and TFE3, while it is not involved in mTORC1-dependent phosphorylation of canonical RPS6KB1/S6K1 and EIF4EBP1/4E-BP1. In low-amino acid conditions, the lysosomal folliculin complex (LFC) is formed on the membrane of lysosomes, which inhibits the GTPase-activating activity of FLCN, inactivates mTORC1 and maximizes nuclear translocation of TFEB and TFE3. Upon amino acid restimulation, RagA/RRAGA (or RagB/RRAGB) nucleotide exchange promotes disassembly of the LFC complex and liberates the GTPase-activating activity of FLCN, leading to activation of mTORC1 and subsequent cytoplasmic retention of TFEB and TFE3. Indirectly acts as a positive regulator of Wnt signaling by promoting mTOR-dependent cytoplasmic retention of MiT/TFE factor TFE3. Required for the exit of hematopoietic stem cell from pluripotency by promoting mTOR-dependent cytoplasmic retention of TFE3, thereby increasing Wnt signaling. Involved in the control of embryonic stem cells differentiation; together with LAMTOR1 it is necessary to recruit and activate RagC/RRAGC and RagD/RRAGD at the lysosomes, and to induce exit of embryonic stem cells from pluripotency via non-canonical, mTOR-independent TFE3 inactivation. Acts as an inhibitor of browning of adipose tissue by regulating mTOR-dependent cytoplasmic retention of TFE3. In response to flow stress, regulates STK11/LKB1 accumulation and mTORC1 activation through primary cilia: may act by recruiting STK11/LKB1 to primary cilia for activation of AMPK resided at basal bodies, causing mTORC1 down-regulation. Together with FNIP1 and/or FNIP2, regulates autophagy: following phosphorylation by ULK1, interacts with GABARAP and promotes autophagy. Required for starvation-induced perinuclear clustering of lysosomes by promoting association of RILP with its effector RAB34. Regulates glycolysis by binding to lactate dehydrogenase LDHA, acting as an uncompetitive inhibitor. This Bos taurus (Bovine) protein is Folliculin.